The following is a 147-amino-acid chain: Cyanate hydratase (147 aa).

Catalysis depends on residues arginine 88, glutamate 91, and serine 114.

Belongs to the cyanase family.

It catalyses the reaction cyanate + hydrogencarbonate + 3 H(+) = NH4(+) + 2 CO2. Functionally, catalyzes the reaction of cyanate with bicarbonate to produce ammonia and carbon dioxide. In Acaryochloris marina (strain MBIC 11017), this protein is Cyanate hydratase.